The primary structure comprises 342 residues: MNAGHTETVRALRIGVAGCADIALRRMLPAFAASPHTEPTAVASRSSEKARAAAETFGCAAVEGYDALLERRDVDAVYIPLPVALHAPWTERALRAGKHVLAEKPLTARAADTARLLDLARERGLVLAENYLFVHHSAYTAVRDLVDAGAIGDVRALSASFTIPPRSADDIRYRADLDGGALLDIGVYPLRLASLLLGSELRVRGAVLRHDTVRGVDLGGSALLGDPGTGVSAQLVFGMEHAYTAGWRLLGSEGSLTLDRAYSPPAGHRPVLRIERPDGTEERILPAHDQATAAVAAFAEAVRRAGQGAGQDKGRSSGDAAAVLRQAELVDAVRQAAHLVKI.

19–25 (CADIALR) is a binding site for NADP(+). A substrate-binding site is contributed by R26. NADP(+)-binding positions include 44–45 (SR), Y65, L81, and H86. The Proton donor role is filled by K104. Positions 172 and 184 each coordinate NADP(+). Residues Y243 and S263 each coordinate substrate.

This sequence belongs to the Gfo/Idh/MocA family.

The enzyme catalyses dTDP-4-dehydro-2,6-dideoxy-alpha-D-glucose + NADP(+) = dTDP-3,4-didehydro-2,6-dideoxy-alpha-D-glucose + NADPH + H(+). It participates in antibiotic biosynthesis; granaticin biosynthesis. Functionally, involved in the biosynthesis of the 2,6-deoxysugar, dTDP-L-rhodinose, attached to the benzoisochromane quinone chromophore to produce the aglycone antibiotics granaticin and granaticin B. Catalyzes the reduction of the C-3 keto moiety of dTDP-3,4-diketo-2,6-dideoxy-alpha-D-glucose to yield dTDP-4-keto-2,6-dideoxy-alpha-D-glucose. NADPH is the better reductant, however NADH can also be used. This is dTDP-3,4-didehydro-2,6-dideoxy-alpha-D-glucose 3-reductase from Streptomyces violaceoruber.